The chain runs to 125 residues: Small ribosomal subunit protein bS6 (125 aa).

A disordered region spans residues 97-125 (TEASPMKAAKEERKPLAEVENNDFEDAEE). Positions 104 to 113 (AAKEERKPLA) are enriched in basic and acidic residues. The segment covering 116 to 125 (ENNDFEDAEE) has biased composition (acidic residues).

Belongs to the bacterial ribosomal protein bS6 family.

Binds together with bS18 to 16S ribosomal RNA. This is Small ribosomal subunit protein bS6 from Haemophilus influenzae (strain PittEE).